The following is a 41-amino-acid chain: Perlinhibin (41 aa).

Post-translationally, contains four disulfide bonds.

In terms of biological role, binds to calcite crystals in the shell and inhibits further shell growth at the binding site. The polypeptide is Perlinhibin (Haliotis laevigata (Smooth Australian abalone)).